A 618-amino-acid chain; its full sequence is Probable arginine--tRNA ligase, cytoplasmic (618 aa).

Interaction with tRNA regions lie at residues 60–61 (ET) and 104–109 (NGIFLR). Residues 146 to 151 (EFSSPN), histidine 160, tyrosine 359, aspartate 363, and glutamine 387 each bind L-arginine. The short motif at 149 to 160 (SPNIAKPFHAGH) is the 'HIGH' region element. The segment at 496–510 (DTGPYLQYAHSRLSS) is interaction with tRNA.

This sequence belongs to the class-I aminoacyl-tRNA synthetase family.

Its subcellular location is the cytoplasm. The enzyme catalyses tRNA(Arg) + L-arginine + ATP = L-arginyl-tRNA(Arg) + AMP + diphosphate. Functionally, forms part of a macromolecular complex that catalyzes the attachment of specific amino acids to cognate tRNAs during protein synthesis. This is Probable arginine--tRNA ligase, cytoplasmic (mrs1) from Schizosaccharomyces pombe (strain 972 / ATCC 24843) (Fission yeast).